The following is a 169-amino-acid chain: MSSYQQKQTFTPPPQLQQQQVKQPSQPPPQEIFVPTTKEPCHSKVPQPGNTKIPEPGCTKVPEPGCTKVPEPGCTKVPEPGCTKVPEPGCTKVPEPGCTKVPEPGYTKVPEPGSIKVPDQGFIKFPEPGAIKVPEQGYTKVPVPGYTKLPEPCPSTVTPGPAQQKTKQK.

Low complexity predominate over residues 1–24 (MSSYQQKQTFTPPPQLQQQQVKQP). Residues 1–57 (MSSYQQKQTFTPPPQLQQQQVKQPSQPPPQEIFVPTTKEPCHSKVPQPGNTKIPEPG) are disordered. An N-acetylserine modification is found at serine 2. 14 tandem repeats follow at residues 43-50 (SKVPQPGN), 51-58 (TKIPEPGC), 59-66 (TKVPEPGC), 67-74 (TKVPEPGC), 75-82 (TKVPEPGC), 83-90 (TKVPEPGC), 91-98 (TKVPEPGC), 99-106 (TKVPEPGY), 107-114 (TKVPEPGS), 115-122 (IKVPDQGF), 123-130 (IKFPEPGA), 131-138 (IKVPEQGY), 139-146 (TKVPVPGY), and 147-154 (TKLPEPCP). Positions 43–154 (SKVPQPGNTK…GYTKLPEPCP (112 aa)) are 14 X 8 AA approximate tandem repeats. The disordered stretch occupies residues 150–169 (PEPCPSTVTPGPAQQKTKQK). Residues 155–169 (STVTPGPAQQKTKQK) show a composition bias toward polar residues.

The protein resides in the cytoplasm. Its function is as follows. Cross-linked envelope protein of keratinocytes. This chain is Small proline-rich protein 3 (SPRR3), found in Homo sapiens (Human).